The following is a 188-amino-acid chain: Adrenodoxin, mitochondrial (188 aa).

Residues 1–64 (MAAAPGARLL…RPLSVSARAR (64 aa)) constitute a mitochondrion transit peptide. The residue at position 67 (serine 67) is a Phosphoserine. The 107-residue stretch at 69–175 (DKVTVHFKNR…NMTVRVPEAV (107 aa)) folds into the 2Fe-2S ferredoxin-type domain. Residue lysine 70 is modified to N6-acetyllysine; alternate. The residue at position 70 (lysine 70) is an N6-succinyllysine; alternate. 4 residues coordinate [2Fe-2S] cluster: cysteine 110, cysteine 116, cysteine 119, and cysteine 156. Lysine 162 carries the post-translational modification N6-succinyllysine. Phosphoserine is present on serine 181.

This sequence belongs to the adrenodoxin/putidaredoxin family. Interacts with CYP11A1. [2Fe-2S] cluster serves as cofactor. As to expression, found in all tissues, most abundant in adrenals, ovaries and testes.

Its subcellular location is the mitochondrion matrix. In terms of biological role, essential for the synthesis of various steroid hormones. Participates in the reduction of mitochondrial cytochrome P450 for steroidogenesis. Transfers electrons from adrenodoxin reductase to CYP11A1, a cytochrome P450 that catalyzes cholesterol side-chain cleavage. Does not form a ternary complex with adrenodoxin reductase and CYP11A1 but shuttles between the two enzymes to transfer electrons. The sequence is that of Adrenodoxin, mitochondrial (Fdx1) from Rattus norvegicus (Rat).